The chain runs to 1010 residues: DENN domain-containing protein 1A (1010 aa).

The 131-residue stretch at 13 to 143 (FEVYIEVNRP…HGHPIPEPGT (131 aa)) folds into the uDENN domain. The region spanning 160-296 (ELPSIPENRN…VVSALKNRIR (137 aa)) is the cDENN domain. Positions 298–375 (MSTTTGDGVA…DGRLDLLNSG (78 aa)) constitute a dDENN domain. Positions 378 to 382 (FSDVF) match the FXDXF motif motif. Positions 455-554 (GFSTATEEPL…EATVKEPQST (100 aa)) are disordered. Residues 472–482 (IEKKRGEERRP) are compositionally biased toward basic and acidic residues. A compositionally biased stretch (basic residues) spans 493-502 (PRPHVPRRPK). Residues 509–524 (SRTTAGSSPDQPQQYR) show a composition bias toward polar residues. The segment covering 538 to 548 (SPEKDSSEATV) has biased composition (basic and acidic residues). The short motif at 560–569 (SLLEDIFSNL) is the Clathrin box element.

It localises to the cytoplasmic vesicle. The protein resides in the clathrin-coated vesicle membrane. Its subcellular location is the presynaptic cell membrane. Functionally, guanine nucleotide exchange factor (GEF) regulating clathrin-mediated endocytosis through RAB35 activation. Promotes the exchange of GDP to GTP, converting inactive GDP-bound RAB35 into its active GTP-bound form. Regulates clathrin-mediated endocytosis of synaptic vesicles and mediates exit from early endosomes. Binds phosphatidylinositol-phosphates (PtdInsPs), with some preference for PtdIns(3)P. In Xenopus laevis (African clawed frog), this protein is DENN domain-containing protein 1A (dennd1a).